We begin with the raw amino-acid sequence, 369 residues long: ATP-dependent 6-phosphofructokinase (369 aa).

Residues glycine 15, 81 to 82, and 108 to 111 each bind ATP; these read KG and GDGS. Aspartate 109 is a Mg(2+) binding site. Substrate contacts are provided by residues 132 to 134, arginine 169, 176 to 178, glutamate 230, arginine 266, and 272 to 275; these read TID, MGR, and HIQR. The Proton acceptor role is filled by aspartate 134.

It belongs to the phosphofructokinase type A (PFKA) family. Mixed-substrate PFK group III subfamily. As to quaternary structure, homodimer or homotetramer. Mg(2+) is required as a cofactor.

The protein localises to the cytoplasm. The enzyme catalyses beta-D-fructose 6-phosphate + ATP = beta-D-fructose 1,6-bisphosphate + ADP + H(+). It participates in carbohydrate degradation; glycolysis; D-glyceraldehyde 3-phosphate and glycerone phosphate from D-glucose: step 3/4. Its function is as follows. Catalyzes the phosphorylation of D-fructose 6-phosphate to fructose 1,6-bisphosphate by ATP, the first committing step of glycolysis. The chain is ATP-dependent 6-phosphofructokinase from Thermosynechococcus vestitus (strain NIES-2133 / IAM M-273 / BP-1).